Consider the following 248-residue polypeptide: tRNA pseudouridine synthase A (248 aa).

Residue Asp-53 is the Nucleophile of the active site. Tyr-111 lines the substrate pocket.

It belongs to the tRNA pseudouridine synthase TruA family. As to quaternary structure, homodimer.

The catalysed reaction is uridine(38/39/40) in tRNA = pseudouridine(38/39/40) in tRNA. Its function is as follows. Formation of pseudouridine at positions 38, 39 and 40 in the anticodon stem and loop of transfer RNAs. The protein is tRNA pseudouridine synthase A of Streptococcus thermophilus (strain ATCC BAA-491 / LMD-9).